We begin with the raw amino-acid sequence, 101 residues long: Small ribosomal subunit protein uS14 (101 aa).

Belongs to the universal ribosomal protein uS14 family. As to quaternary structure, part of the 30S ribosomal subunit. Contacts proteins S3 and S10.

Binds 16S rRNA, required for the assembly of 30S particles and may also be responsible for determining the conformation of the 16S rRNA at the A site. The sequence is that of Small ribosomal subunit protein uS14 from Shewanella piezotolerans (strain WP3 / JCM 13877).